The chain runs to 147 residues: Cytochrome c-type biogenesis protein CcmE (147 aa).

Topologically, residues 1-9 (MKNLKKQRR) are cytoplasmic. The chain crosses the membrane as a helical; Signal-anchor for type II membrane protein span at residues 10–30 (IQVIALATVALVLSTALIGYA). At 31 to 147 (MRDGINFFRA…EQGVYKGTEG (117 aa)) the chain is on the periplasmic side. Heme contacts are provided by His-123 and Tyr-127.

Belongs to the CcmE/CycJ family.

It localises to the cell inner membrane. Functionally, heme chaperone required for the biogenesis of c-type cytochromes. Transiently binds heme delivered by CcmC and transfers the heme to apo-cytochromes in a process facilitated by CcmF and CcmH. This chain is Cytochrome c-type biogenesis protein CcmE, found in Roseobacter denitrificans (strain ATCC 33942 / OCh 114) (Erythrobacter sp. (strain OCh 114)).